Here is a 490-residue protein sequence, read N- to C-terminus: MADTLRRLVNSSPYSVLQDKLDAWYKDYHVYSCDQNLNRCCELVELTSKIQGQLFTILNLTAQEGGHYSGVDTLKSRLLPWLGSCFTIAASAVSSDTSLSLIQESVEKDRKIRELSSVHESNLQKIEDQLCSTRIELDSVKRELVDTHIELDSTKNKSATTLLATEDEILHLKSELRVAQDQLDLYKRKLDVLDDYERQVRILRDEVSFLNAEKTVLQDRLARSRSPSPLLRRSRSVSPVRGESPTRAQLTSSSRHARLVSRFSDLYATERLESQSLLLKYIDDLETVQRILFIAAVESFQAAKLAYRQFKSRVRKTLSSTHIGPESLEDAVVDYIVRNLDLYDVQTSINDVINAMNVNPRISFPPEVDFVLISSFIREACRIAFAMQTLDPPLDLAFSSDGELYSDVKYRRSFDSEFTAPLVAFHVWPALLEGDTVILKGEAVTRRGALWKSRSRSSSPVRSRSGSPSRTFMASHSRSPSPGRLSSSRL.

A coiled-coil region spans residues 112–210 (IRELSSVHES…RILRDEVSFL (99 aa)). 2 stretches are compositionally biased toward low complexity: residues 224–241 (SRSP…SPVR) and 456–490 (RSSS…SSRL). 2 disordered regions span residues 224 to 253 (SRSP…LTSS) and 455 to 490 (SRSS…SSRL).

It belongs to the MIEAP family.

It is found in the cytoplasm. Its subcellular location is the mitochondrion outer membrane. It localises to the mitochondrion matrix. In terms of biological role, key regulator of mitochondrial quality that mediates the repairing or degradation of unhealthy mitochondria in response to mitochondrial damage. Mediator of mitochondrial protein catabolic process (also named MALM) by mediating the degradation of damaged proteins inside mitochondria by promoting the accumulation in the mitochondrial matrix of hydrolases that are characteristic of the lysosomal lumen. Also involved in mitochondrion degradation of damaged mitochondria by promoting the formation of vacuole-like structures (named MIV), which engulf and degrade unhealthy mitochondria by accumulating lysosomes. Binds cardiolipin. May form molecular condensates (non-membrane-bounded organelles) within mitochondria that compartmentalize and promote cardiolipin metabolism. The protein is Mitochondria-eating protein (spata18) of Danio rerio (Zebrafish).